Consider the following 126-residue polypeptide: Cysteine-rich tail protein 1 (126 aa).

Positions 1-89 (MDPHETLVKN…PAGLAYAGPP (89 aa)) are disordered.

This sequence belongs to the CYSRT1 family. As to quaternary structure, interacts with components of the late cornfied envelope (LCE).

The protein localises to the cornified envelope. Its function is as follows. Component of the stratum corneum that may contribute to epidermal antimicrobial host defenses. The chain is Cysteine-rich tail protein 1 (CYSRT1) from Bos taurus (Bovine).